The chain runs to 1770 residues: Transposon Ty2-DR3 Gag-Pol polyprotein (1770 aa).

Polar residues-rich tracts occupy residues 1-11 (MESQQLHQNPH), 19-39 (ASVTSKEVPSNQDPLAVSASN), 49-60 (KVNSQQETTPGT), 366-390 (VSRTSPNTTNTKVTSRNYHRTNSSK), 399-408 (IATSSKFSRV), and 415-435 (ESTVSSQYLSDDNELSLGQQQ). 2 disordered regions span residues 1–89 (MESQ…QQHG) and 355–449 (SQYK…SNDE). Residues 295–397 (ENNINVSDRL…SSKPRAAKAH (103 aa)) form an RNA-binding region. Aspartate 457 functions as the For protease activity; shared with dimeric partner in the catalytic mechanism. Residues 579–636 (NVNKSKSVNKYPYPLIHRMLGHANFRSIQKSLKKNAVTYLKESDIEWSNASTYQCPDC) form an integrase-type zinc finger-like region. The Integrase catalytic domain occupies 656–831 (ESYEPFQYLH…AGLDITTILP (176 aa)). The Mg(2+) site is built by aspartate 667 and aspartate 732. Disordered regions lie at residues 1005–1038 (GGTIESDTTSPRHSSTFTARNQKRPGSPNDMIDL) and 1057–1205 (GGTE…TEIE). Polar residues-rich tracts occupy residues 1009–1024 (ESDTTSPRHSSTFTAR) and 1065–1082 (QRNSDTNIKYRTTNSTPS). The short motif at 1193 to 1227 (KKRSLEDNETEIEVSRDTWNNKNMRSLEPPRSKKR) is the Bipartite nuclear localization signal element. A Reverse transcriptase Ty1/copia-type domain is found at 1353-1491 (NDYYITQLDI…DILGLEIKYQ (139 aa)). Aspartate 1361, aspartate 1442, aspartate 1443, aspartate 1625, glutamate 1667, and aspartate 1700 together coordinate Mg(2+). Residues 1625-1767 (DASYGNQPYY…IKTFKLLTNK (143 aa)) enclose the RNase H Ty1/copia-type domain.

As to quaternary structure, the capsid protein forms a homotrimer, from which the VLPs are assembled. The protease is a homodimer, whose active site consists of two apposed aspartic acid residues. Initially, virus-like particles (VLPs) are composed of the structural unprocessed proteins Gag and Gag-Pol, and also contain the host initiator methionine tRNA (tRNA(i)-Met) which serves as a primer for minus-strand DNA synthesis, and a dimer of genomic Ty RNA. Processing of the polyproteins occurs within the particle and proceeds by an ordered pathway, called maturation. First, the protease (PR) is released by autocatalytic cleavage of the Gag-Pol polyprotein, and this cleavage is a prerequisite for subsequent processing at the remaining sites to release the mature structural and catalytic proteins. Maturation takes place prior to the RT reaction and is required to produce transposition-competent VLPs.

The protein localises to the cytoplasm. Its subcellular location is the nucleus. The catalysed reaction is DNA(n) + a 2'-deoxyribonucleoside 5'-triphosphate = DNA(n+1) + diphosphate. The enzyme catalyses Endonucleolytic cleavage to 5'-phosphomonoester.. Functionally, capsid protein (CA) is the structural component of the virus-like particle (VLP), forming the shell that encapsulates the retrotransposons dimeric RNA genome. The particles are assembled from trimer-clustered units and there are holes in the capsid shells that allow for the diffusion of macromolecules. CA also has nucleocapsid-like chaperone activity, promoting primer tRNA(i)-Met annealing to the multipartite primer-binding site (PBS), dimerization of Ty2 RNA and initiation of reverse transcription. In terms of biological role, the aspartyl protease (PR) mediates the proteolytic cleavages of the Gag and Gag-Pol polyproteins after assembly of the VLP. Its function is as follows. Reverse transcriptase/ribonuclease H (RT) is a multifunctional enzyme that catalyzes the conversion of the retro-elements RNA genome into dsDNA within the VLP. The enzyme displays a DNA polymerase activity that can copy either DNA or RNA templates, and a ribonuclease H (RNase H) activity that cleaves the RNA strand of RNA-DNA heteroduplexes during plus-strand synthesis and hydrolyzes RNA primers. The conversion leads to a linear dsDNA copy of the retrotransposon that includes long terminal repeats (LTRs) at both ends. Integrase (IN) targets the VLP to the nucleus, where a subparticle preintegration complex (PIC) containing at least integrase and the newly synthesized dsDNA copy of the retrotransposon must transit the nuclear membrane. Once in the nucleus, integrase performs the integration of the dsDNA into the host genome. This chain is Transposon Ty2-DR3 Gag-Pol polyprotein (TY2B-DR3), found in Saccharomyces cerevisiae (strain ATCC 204508 / S288c) (Baker's yeast).